The primary structure comprises 398 residues: O-methyltransferase mpaG' (398 aa).

S144 is a (4E,8E)-10-(4,6-dihydroxy-7-methyl-3-oxo-1,3-dihydro-2-benzofuran-5-yl)-4,8-dimethyldeca-4,8-dienoate binding site. S144 contributes to the 4-farnesyl-3,5-dihydroxy-6-methylphthalide binding site. Residue S144 coordinates 6-O-desmethylmycophenolate. N197 contacts S-adenosyl-L-homocysteine. Y199 is a binding site for (4E,8E)-10-(4,6-dihydroxy-7-methyl-3-oxo-1,3-dihydro-2-benzofuran-5-yl)-4,8-dimethyldeca-4,8-dienoate. Y199 contributes to the 4-farnesyl-3,5-dihydroxy-6-methylphthalide binding site. Residue Y199 coordinates 6-O-desmethylmycophenolate. Residues Y203, D237, G239, H244, D245, D264, and R265 each coordinate S-adenosyl-L-homocysteine. D264 lines the S-adenosyl-L-methionine pocket. Residues R265 and Q267 each coordinate (4E,8E)-10-(4,6-dihydroxy-7-methyl-3-oxo-1,3-dihydro-2-benzofuran-5-yl)-4,8-dimethyldeca-4,8-dienoate. R265 is a binding site for 6-O-desmethylmycophenolate. Positions 286, 287, and 302 each coordinate S-adenosyl-L-homocysteine. S303 is a binding site for (4E,8E)-10-(4,6-dihydroxy-7-methyl-3-oxo-1,3-dihydro-2-benzofuran-5-yl)-4,8-dimethyldeca-4,8-dienoate. 4-farnesyl-3,5-dihydroxy-6-methylphthalide is bound at residue S303. S303 contributes to the 6-O-desmethylmycophenolate binding site. The active-site Proton acceptor is the H306. Catalysis depends on residues E335 and E362.

This sequence belongs to the class I-like SAM-binding methyltransferase superfamily. Cation-independent O-methyltransferase family. In terms of assembly, homodimer.

It localises to the cytoplasm. It is found in the cytosol. The catalysed reaction is (4E,8E)-10-(4,6-dihydroxy-7-methyl-3-oxo-1,3-dihydro-2-benzofuran-5-yl)-4,8-dimethyldeca-4,8-dienoate + S-adenosyl-L-methionine = (4E,8E)-10-(4-hydroxy-6-methoxy-7-methyl-3-oxo-1,3-dihydro-2-benzofuran-5-yl)-4,8-dimethyldeca-4,8-dienoate + S-adenosyl-L-homocysteine + H(+). The enzyme catalyses 4-farnesyl-3,5-dihydroxy-6-methylphthalide + S-adenosyl-L-methionine = 4-farnesyl-3,5-dihydroxy-6-methoxylphthalide + S-adenosyl-L-homocysteine + H(+). It carries out the reaction 6-O-desmethylmycophenolate + S-adenosyl-L-methionine = mycophenolate + S-adenosyl-L-homocysteine + H(+). Its pathway is secondary metabolite biosynthesis; terpenoid biosynthesis. Its function is as follows. O-methyltransferase; part of the gene cluster that mediates the biosynthesis of mycophenolic acid (MPA), the first isolated antibiotic natural product in the world obtained from a culture of Penicillium brevicompactum in 1893. MpaG' catalyzes the 5-O-methylation of three precursors in MPA biosynthesis including demethylmycophenolic acid (DMMPA), 4-farnesyl-3,5-dihydroxy-6-methylphthalide (FDHMP), and an intermediate containing three fewer carbon atoms compared to FDHMP (FDHMP-3C) with different catalytic efficiencies. The first step of the pathway is the synthesis of 5-methylorsellinic acid (5MOA) by the cytosolic polyketide synthase mpaC. 5MOA is then converted to the phthalide compound 5,7-dihydroxy-4,6-dimethylphthalide (DHMP) by the endoplasmic reticulum-bound cytochrome P450 monooxygenase mpaDE. MpaDE first catalyzes hydroxylation of 5-MOA to 4,6-dihydroxy-2-(hydroxymethyl)-3-methylbenzoic acid (DHMB). MpaDE then acts as a lactone synthase that catalyzes the ring closure to convert DHMB into DHMP. The next step is the prenylation of DHMP by the Golgi apparatus-associated prenyltransferase mpaA to yield farnesyl-DHMP (FDHMP). The ER-bound oxygenase mpaB then mediates the oxidative cleavage the C19-C20 double bond in FDHMP to yield FDHMP-3C via a mycophenolic aldehyde intermediate. The O-methyltransferase mpaG catalyzes the methylation of FDHMP-3C to yield MFDHMP-3C. MpaG and mpaB can also switch the order in which they act and, in this case, the conversion of FDHMP to MFDHMP-3C can take place via 5-O-methyl-FDHMP (MFDHMP). After the cytosolic methylation of FDHMP-3C, MFDHMP-3C enters into peroxisomes probably via free diffusion due to its low molecular weight. Upon a peroxisomal CoA ligation reaction, catalyzed by a beta-oxidation component enzyme acyl-CoA ligase ACL891, MFDHMP-3C-CoA would then be restricted to peroxisomes for the following beta-oxidation pathway steps. The peroxisomal beta-oxidation machinery than converts MFDHMP-3C-CoA into MPA_CoA, via a beta-oxidation chain-shortening process. Finally mpaH acts as a peroxisomal acyl-CoA hydrolase with high substrate specificity toward MPA-CoA to release the final product MPA. MpaH can also hydrolyze DMMPA-CoA to release demethylmycophenolic acid (DMMPA) that is further converted to MPA by mpaG. The sequence is that of O-methyltransferase mpaG' from Penicillium brevicompactum.